The chain runs to 317 residues: ADP-L-glycero-D-manno-heptose-6-epimerase (317 aa).

NADP(+) contacts are provided by residues 10 to 11 (FI), 31 to 32 (DD), K38, K53, 75 to 79 (QGACS), and N92. The Proton acceptor role is filled by Y139. K143 contacts NADP(+). N166 is a binding site for substrate. NADP(+)-binding residues include V167 and K175. Residue K175 is the Proton acceptor of the active site. Substrate contacts are provided by residues G177, H184, 198 to 201 (FEGV), R211, and Y275.

Belongs to the NAD(P)-dependent epimerase/dehydratase family. HldD subfamily. As to quaternary structure, homopentamer. The cofactor is NADP(+).

It catalyses the reaction ADP-D-glycero-beta-D-manno-heptose = ADP-L-glycero-beta-D-manno-heptose. Its pathway is nucleotide-sugar biosynthesis; ADP-L-glycero-beta-D-manno-heptose biosynthesis; ADP-L-glycero-beta-D-manno-heptose from D-glycero-beta-D-manno-heptose 7-phosphate: step 4/4. In terms of biological role, catalyzes the interconversion between ADP-D-glycero-beta-D-manno-heptose and ADP-L-glycero-beta-D-manno-heptose via an epimerization at carbon 6 of the heptose. In Shewanella piezotolerans (strain WP3 / JCM 13877), this protein is ADP-L-glycero-D-manno-heptose-6-epimerase.